Consider the following 662-residue polypeptide: 72 kDa type IV collagenase (662 aa).

Positions 1–29 (MEALGARGALAGFLRALCVLGCLLGRATA) are cleaved as a signal peptide. The propeptide at 30-109 (PPSPVIKFPG…PRCGNPDVAN (80 aa)) is activation peptide. Residues 100–107 (PRCGNPDV) carry the Cysteine switch motif. Residue cysteine 102 coordinates Zn(2+). The segment at 110–221 (YNFFPRKPKW…LWTLGEGQVV (112 aa)) is collagenase-like 1. 2 residues coordinate Ca(2+): aspartate 134 and aspartate 168. Positions 178 and 180 each coordinate Zn(2+). Ca(2+) contacts are provided by aspartate 185 and glycine 186. Histidine 193 is a Zn(2+) binding site. Residues glycine 200, glycine 202, and aspartate 204 each coordinate Ca(2+). Histidine 206 is a binding site for Zn(2+). Ca(2+) is bound by residues aspartate 208, aspartate 209, and glutamate 211. A collagen-binding region spans residues 222 to 396 (RVKYGNADGE…WGFCPDQGYS (175 aa)). 3 Fibronectin type-II domains span residues 228 to 276 (ADGE…FCPH), 286 to 334 (ADGQ…FCPE), and 344 to 392 (SEGA…FCPD). 6 cysteine pairs are disulfide-bonded: cysteine 233-cysteine 259, cysteine 247-cysteine 274, cysteine 291-cysteine 317, cysteine 305-cysteine 332, cysteine 349-cysteine 375, and cysteine 363-cysteine 390. A collagenase-like 2 region spans residues 397–467 (LFLVAAHEFG…GPTPTLGPVT (71 aa)). Histidine 403 contacts Zn(2+). The active site involves glutamate 404. 2 residues coordinate Zn(2+): histidine 407 and histidine 413. A required for inhibitor TIMP2 binding region spans residues 414 to 662 (SQDPGALMAP…GSIKTDWLGC (249 aa)). Cysteine 471 and cysteine 662 are oxidised to a cystine. Hemopexin repeat units follow at residues 474–518 (DIVF…WPEL), 519–565 (PEKI…GLPP), 567–615 (VQRV…WNAI), and 616–662 (PDHL…WLGC). Positions 478, 523, and 571 each coordinate Ca(2+). Asparagine 575 carries an N-linked (GlcNAc...) asparagine glycan. Aspartate 620 provides a ligand contact to Ca(2+). Residue asparagine 644 is glycosylated (N-linked (GlcNAc...) asparagine).

It belongs to the peptidase M10A family. In terms of assembly, interacts (via the C-terminal hemopexin-like domains-containing region) with the integrin alpha-V/beta-3; the interaction promotes vascular invasion in angiogenic vessels and melamoma cells. Interacts (via the C-terminal PEX domain) with TIMP2 (via the C-terminal); the interaction inhibits the degradation activity. Interacts with GSK3B. Ca(2+) is required as a cofactor. It depends on Zn(2+) as a cofactor. Post-translationally, phosphorylation on multiple sites modulates enzymatic activity. Phosphorylated by PKC in vitro. In terms of processing, the propeptide is processed by MMP14 (MT-MMP1) and MMP16 (MT-MMP3). Autocatalytic cleavage in the C-terminal produces the anti-angiogenic peptide, PEX. This processing appears to be facilitated by binding integrinv/beta3.

It is found in the secreted. The protein localises to the extracellular space. It localises to the extracellular matrix. Its subcellular location is the membrane. The protein resides in the nucleus. The enzyme catalyses Cleavage of gelatin type I and collagen types IV, V, VII, X. Cleaves the collagen-like sequence Pro-Gln-Gly-|-Ile-Ala-Gly-Gln.. Ubiquitinous metalloproteinase that is involved in diverse functions such as remodeling of the vasculature, angiogenesis, tissue repair, tumor invasion, inflammation, and atherosclerotic plaque rupture. As well as degrading extracellular matrix proteins, can also act on several nonmatrix proteins such as big endothelial 1 and beta-type CGRP promoting vasoconstriction. Also cleaves KISS at a Gly-|-Leu bond. Appears to have a role in myocardial cell death pathways. Contributes to myocardial oxidative stress by regulating the activity of GSK3beta. Cleaves GSK3beta in vitro. Involved in the formation of the fibrovascular tissues. In terms of biological role, PEX, the C-terminal non-catalytic fragment of MMP2, possesses anti-angiogenic and anti-tumor properties and inhibits cell migration and cell adhesion to FGF2 and vitronectin. Ligand for integrin alpha-v/beta-3 on the surface of blood vessels. In Oryctolagus cuniculus (Rabbit), this protein is 72 kDa type IV collagenase (MMP2).